We begin with the raw amino-acid sequence, 355 residues long: Carbohydrate sulfotransferase 10 (355 aa).

The Cytoplasmic portion of the chain corresponds to 1–6 (MHHRWL). Residues 7-27 (LLVACFWVLFMLMVASKLITL) form a helical; Signal-anchor for type II membrane protein membrane-spanning segment. Over 28–355 (TMKDPEGYGN…FGYKEPTFLF (328 aa)) the chain is Lumenal. N-linked (GlcNAc...) asparagine glycosylation is found at Asn-93 and Asn-98. Residues 126 to 132 (PKVGNTQ) and 188 to 196 (RDPFERLIS) contribute to the 3'-phosphoadenylyl sulfate site. Asn-316 carries N-linked (GlcNAc...) asparagine glycosylation.

It belongs to the sulfotransferase 2 family.

It is found in the golgi apparatus membrane. In terms of biological role, catalyzes the transfer of sulfate to position 3 of terminal glucuronic acid of both protein- and lipid-linked oligosaccharides. Participates in biosynthesis of HNK-1 carbohydrate structure, a sulfated glucuronyl-lactosaminyl residue carried by many neural recognition molecules. The polypeptide is Carbohydrate sulfotransferase 10 (chst10) (Xenopus laevis (African clawed frog)).